The following is a 106-amino-acid chain: Cell division protein FtsB (106 aa).

The Cytoplasmic portion of the chain corresponds to 1-3 (MGK). A helical membrane pass occupies residues 4 to 21 (LTLLLLVLLGWLQYSLWL). Topologically, residues 22–106 (GKNGIHDFVR…GTPSTQNNAQ (85 aa)) are periplasmic. The stretch at 31 to 62 (RVKEDVAAQEANNSTLKARNDQLFAEIDDLNG) forms a coiled coil.

The protein belongs to the FtsB family. As to quaternary structure, part of a complex composed of FtsB, FtsL and FtsQ.

It is found in the cell inner membrane. In terms of biological role, essential cell division protein. May link together the upstream cell division proteins, which are predominantly cytoplasmic, with the downstream cell division proteins, which are predominantly periplasmic. In Yersinia pseudotuberculosis serotype O:1b (strain IP 31758), this protein is Cell division protein FtsB.